The sequence spans 87 residues: Small ribosomal subunit protein bS16 (87 aa).

Belongs to the bacterial ribosomal protein bS16 family.

This Desulfatibacillum aliphaticivorans protein is Small ribosomal subunit protein bS16.